The chain runs to 230 residues: Dephospho-CoA kinase (230 aa).

A DPCK domain is found at 3-206 (LVGLTGGIAS…EPLTWKERLR (204 aa)). Position 8 to 15 (8 to 15 (GGIASGKS)) interacts with ATP.

This sequence belongs to the CoaE family.

The catalysed reaction is 3'-dephospho-CoA + ATP = ADP + CoA + H(+). It participates in cofactor biosynthesis; coenzyme A biosynthesis; CoA from (R)-pantothenate: step 5/5. Functionally, catalyzes the phosphorylation of the 3'-hydroxyl group of dephosphocoenzyme A to form coenzyme A. In Oryza sativa subsp. japonica (Rice), this protein is Dephospho-CoA kinase.